The primary structure comprises 645 residues: Serine/threonine-protein kinase BUR1 (645 aa).

One can recognise a Protein kinase domain in the interval 55–379 (YREEEKLGQG…AMKAKKHPFF (325 aa)). ATP is bound by residues 61-69 (LGQGTFGEV) and lysine 84. Catalysis depends on aspartate 208, which acts as the Proton acceptor. Disordered regions lie at residues 407-428 (EMNE…STDN), 442-513 (ASIP…KYPA), and 533-645 (RYRN…ADYY). Composition is skewed to polar residues over residues 409-428 (NESM…STDN) and 457-474 (IPAQ…TQNI). The segment covering 477 to 486 (EPIPTAPLPK) has biased composition (pro residues). Over residues 578 to 598 (NRYQNQDYNTSRNTGYNQYSQ) the composition is skewed to polar residues.

This sequence belongs to the protein kinase superfamily. CMGC Ser/Thr protein kinase family. CDC2/CDKX subfamily.

It localises to the nucleus. The enzyme catalyses L-seryl-[protein] + ATP = O-phospho-L-seryl-[protein] + ADP + H(+). The catalysed reaction is L-threonyl-[protein] + ATP = O-phospho-L-threonyl-[protein] + ADP + H(+). It catalyses the reaction [DNA-directed RNA polymerase] + ATP = phospho-[DNA-directed RNA polymerase] + ADP + H(+). Functionally, serine/threonine-protein kinase involved in transcription regulation. Phosphorylates the UBC2/RAD6 ubiquitin-conjugating enzyme (E2), leading to monoubiquitination of histone H2B and the silencing of telomeric-associated genes. Also required for histone H3 methylation. Necessary for the recovery from pheromone-induced growth arrest in the cell cycle G1 phase. In Kluyveromyces lactis (strain ATCC 8585 / CBS 2359 / DSM 70799 / NBRC 1267 / NRRL Y-1140 / WM37) (Yeast), this protein is Serine/threonine-protein kinase BUR1 (BUR1).